The chain runs to 288 residues: Serine/threonine-protein phosphatase PGAM5, mitochondrial (288 aa).

The Mitochondrial matrix portion of the chain corresponds to 1–6 (MAFRQA). A helical membrane pass occupies residues 7–29 (LQLAACGLAGGSAAVLFSAVAVG). The Mitochondrial intermembrane segment spans residues 30-288 (KPRAGGDADT…FMPPDKITRS (259 aa)). Residues 76 to 81 (NVEFGE) are interaction with KEAP1. At Ser-86 the chain carries Phosphoserine. 3 positions are modified to N6-acetyllysine: Lys-115, Lys-143, and Lys-190.

It belongs to the phosphoglycerate mutase family. BPG-dependent PGAM subfamily. As to quaternary structure, dimer. Forms a ternary complex with NFE2L2 and KEAP1. Interacts with BCL2L1 and MAP3K5. Upon TNF-induced necrosis, forms in complex with RIPK1, RIPK3 and MLKL; the formation of this complex leads to PGAM5 phosphorylation. Isoform 2, but not isoform 1, interacts with DNM1L; this interaction leads to DNM1L dephosphorylation and activation and eventually to mitochondria fragmentation. Post-translationally, phosphorylated by the RIPK1/RIPK3 complex under necrotic conditions. This phosphorylation increases PGAM5 phosphatase activity. Proteolytically cleaved by PARL in response to loss of mitochondrial membrane potential.

It is found in the mitochondrion outer membrane. It localises to the mitochondrion inner membrane. It carries out the reaction O-phospho-L-seryl-[protein] + H2O = L-seryl-[protein] + phosphate. The catalysed reaction is O-phospho-L-threonyl-[protein] + H2O = L-threonyl-[protein] + phosphate. Its function is as follows. Mitochondrial serine/threonine phosphatase that dephosphorylates various substrates and thus plays a role in different biological processes including cellular senescence or mitophagy. Modulates cellular senescence by regulating mitochondrial dynamics. Mechanistically, participates in mitochondrial fission through dephosphorylating DNM1L/DRP1. Additionally, dephosphorylates MFN2 in a stress-sensitive manner and consequently protects it from ubiquitination and degradation to promote mitochondrial network formation. Regulates mitophagy independent of PARKIN by interacting with and dephosphorylating FUNDC1, which interacts with LC3. Regulates anti-oxidative response by forming a tertiary complex with KEAP1 and NRF2. Regulates necroptosis by acting as a RIPK3 target and recruiting the RIPK1-RIPK3-MLKL necrosis 'attack' complex to mitochondria. This Rattus norvegicus (Rat) protein is Serine/threonine-protein phosphatase PGAM5, mitochondrial (Pgam5).